A 76-amino-acid chain; its full sequence is Theta defensin subunit A (76 aa).

The N-terminal stretch at 1-22 (MRTFALLTAMLLLVALHAQAEA) is a signal peptide. A propeptide spanning residues 23–64 (RQARADEAAAQQQPGADDQGMAHSFTWPENAALPLSESAKGL) is cleaved from the precursor. Residues 25–45 (ARADEAAAQQQPGADDQGMAH) are disordered. Over residues 30–44 (AAAQQQPGADDQGMA) the composition is skewed to low complexity. Residue Arg-65 forms a Cyclopeptide (Arg-Cys) (interchain with C-73 in subunit A); in form BTD-3 linkage. Arg-65 participates in a covalent cross-link: Cyclopeptide (Arg-Cys) (interchain with C-73 in subunit B); in form BTD-1. Residue Arg-65 forms a Cyclopeptide (Arg-Cys) (interchain with C-73 in subunit C); in form BTD-4 linkage. Arg-65 is covalently cross-linked (Cyclopeptide (Arg-Cys) (interchain with C-73 in subunit D); in form BTD-7). Residues Cys-68 and Cys-73 are joined by a disulfide bond. Residue Cys-73 forms a Cyclopeptide (Cys-Arg) (interchain with R-65 in subunit A); in form BTD-3 linkage. Cys-73 participates in a covalent cross-link: Cyclopeptide (Cys-Arg) (interchain with R-65 in subunit B); in form BTD-1. Cys-73 participates in a covalent cross-link: Cyclopeptide (Cys-Arg) (interchain with R-65 in subunit C); in form BTD-4. Residue Cys-73 forms a Cyclopeptide (Cys-Arg) (interchain with R-65 in subunit D); in form BTD-7 linkage. Residues 74 to 76 (RLL) constitute a propeptide that is removed on maturation.

The protein belongs to the alpha-defensin family. Theta subfamily. BTD-1 is a cyclic heterodimer composed of subunits A and B; disulfide-linked. BTD-3 is a cyclic homodimer composed of two subunits A; disulfide-linked. BTD-4 is a cyclic heterodimer composed of subunits A and C; disulfide-linked. BTD-7 is a cyclic heterodimer composed of subunits A and D; disulfide-linked. Post-translationally, forms a cyclic peptide with subunit B (BTD-1), subunit A (BTD-3), subunit C (BTD-4), or subunit D (BTD-7). An additional intersubunit disulfide bond is formed.

In terms of biological role, BTD-1, BTD-3, BTD-4 and BTD-7 have antimicrobial activity against the Gram-negative bacterium E.coli ML35, the Gram-positive bacterium S.aureus 502a, and the fungus C.albicans 16820. BTD-3 is more effective against E.coli than BTD-1, BTD-4 and BTD-7. This is Theta defensin subunit A (BTDA) from Papio anubis (Olive baboon).